Here is a 423-residue protein sequence, read N- to C-terminus: Protein MANNAN SYNTHESIS-RELATED 2 (423 aa).

The Cytoplasmic portion of the chain corresponds to 1–6; the sequence is MGVDLR. A helical; Signal-anchor for type II membrane protein membrane pass occupies residues 7 to 26; the sequence is QVVAGILTITMFVMLGQMLH. The Lumenal portion of the chain corresponds to 27-423; that stretch reads RDYFDAVQEK…KNHLAYSCFC (397 aa). 264–266 contacts substrate; it reads DLR.

The protein belongs to the glycosyltransferase GT106 family. In terms of tissue distribution, widely expressed.

It localises to the golgi apparatus membrane. It participates in glycan biosynthesis. Its function is as follows. Glycosyltransferase involved in mannan biosynthesis. In Arabidopsis thaliana (Mouse-ear cress), this protein is Protein MANNAN SYNTHESIS-RELATED 2.